Reading from the N-terminus, the 335-residue chain is MSLQKCQEEWGELEKEFQQLQETHKVYKQKLEELNGLQNLCSSYINKHKRRLTELKGNLHGYKHTSNVEEKELVQQINSTIKERHNAFFDMEAYLPKKNGLYLNLVLGNVNVTLLSNQAKFAYKDEYEKFKLYLTIILLLGAITCRFVLHYRVTDEVFNFLLVWYYCTLTIRESILISNGSRIKGWWVSHHYVSTFLSGVMLTWPDGLMYQIFRNQFLAFSIYQSCVQFLQYYYQSGCLYRLRALGERNHLDLTVEGFQSWMWRGLTFLLPFLFFGHFWQLYNAITLFGLSRHEECKEWQVFVLALTFLLLFLGNFLTTLKVVHTKFQKNKLKKP.

Residues 1-39 adopt a coiled-coil conformation; sequence MSLQKCQEEWGELEKEFQQLQETHKVYKQKLEELNGLQN. 6 helical membrane passes run 100 to 122, 130 to 150, 157 to 177, 193 to 213, 268 to 288, and 300 to 320; these read GLYL…AKFA, FKLY…FVLH, VFNF…SILI, VSTF…YQIF, FLLP…ITLF, and QVFV…LTTL.

This sequence belongs to the TMEM120 family.

The protein localises to the nucleus inner membrane. Functionally, necessary for efficient adipogenesis. Does not show ion channel activity. The sequence is that of Transmembrane protein 120B (tmem120b) from Xenopus tropicalis (Western clawed frog).